A 156-amino-acid polypeptide reads, in one-letter code: Endoribonuclease YbeY (156 aa).

Zn(2+) contacts are provided by histidine 122, histidine 126, and histidine 132.

The protein belongs to the endoribonuclease YbeY family. It depends on Zn(2+) as a cofactor.

Its subcellular location is the cytoplasm. Its function is as follows. Single strand-specific metallo-endoribonuclease involved in late-stage 70S ribosome quality control and in maturation of the 3' terminus of the 16S rRNA. In Symbiobacterium thermophilum (strain DSM 24528 / JCM 14929 / IAM 14863 / T), this protein is Endoribonuclease YbeY.